Consider the following 239-residue polypeptide: Ion-translocating oxidoreductase complex subunit E (239 aa).

5 helical membrane-spanning segments follow: residues 41-61, 71-91, 95-115, 130-150, and 184-204; these read LGLG…VSLV, LPAF…LMQA, ELYQ…VILG, SFDG…LGGL, and GFLL…LIAL.

Belongs to the NqrDE/RnfAE family. In terms of assembly, the complex is composed of six subunits: RnfA, RnfB, RnfC, RnfD, RnfE and RnfG.

The protein resides in the cell inner membrane. In terms of biological role, part of a membrane-bound complex that couples electron transfer with translocation of ions across the membrane. This chain is Ion-translocating oxidoreductase complex subunit E, found in Pseudomonas paraeruginosa (strain DSM 24068 / PA7) (Pseudomonas aeruginosa (strain PA7)).